A 65-amino-acid polypeptide reads, in one-letter code: Large ribosomal subunit protein bL35 (65 aa).

Composition is skewed to basic residues over residues 1-15 (MPKM…KRFT) and 26-44 (QAFK…KRQL). Residues 1–65 (MPKMKTKKSA…KSVRAMMPYA (65 aa)) are disordered.

Belongs to the bacterial ribosomal protein bL35 family.

The sequence is that of Large ribosomal subunit protein bL35 from Cupriavidus metallidurans (strain ATCC 43123 / DSM 2839 / NBRC 102507 / CH34) (Ralstonia metallidurans).